We begin with the raw amino-acid sequence, 494 residues long: Probable cytosol aminopeptidase (494 aa).

Mn(2+)-binding residues include Lys-260 and Asp-265. Residue Lys-272 is part of the active site. Mn(2+)-binding residues include Asp-283, Asp-342, and Glu-344. Residue Arg-346 is part of the active site.

The protein belongs to the peptidase M17 family. It depends on Mn(2+) as a cofactor.

It is found in the cytoplasm. It carries out the reaction Release of an N-terminal amino acid, Xaa-|-Yaa-, in which Xaa is preferably Leu, but may be other amino acids including Pro although not Arg or Lys, and Yaa may be Pro. Amino acid amides and methyl esters are also readily hydrolyzed, but rates on arylamides are exceedingly low.. It catalyses the reaction Release of an N-terminal amino acid, preferentially leucine, but not glutamic or aspartic acids.. Its function is as follows. Presumably involved in the processing and regular turnover of intracellular proteins. Catalyzes the removal of unsubstituted N-terminal amino acids from various peptides. The chain is Probable cytosol aminopeptidase from Bacillus mycoides (strain KBAB4) (Bacillus weihenstephanensis).